Here is a 193-residue protein sequence, read N- to C-terminus: dTTP/UTP pyrophosphatase (193 aa).

Aspartate 71 acts as the Proton acceptor in catalysis.

This sequence belongs to the Maf family. YhdE subfamily. A divalent metal cation serves as cofactor.

It is found in the cytoplasm. It catalyses the reaction dTTP + H2O = dTMP + diphosphate + H(+). The catalysed reaction is UTP + H2O = UMP + diphosphate + H(+). Functionally, nucleoside triphosphate pyrophosphatase that hydrolyzes dTTP and UTP. May have a dual role in cell division arrest and in preventing the incorporation of modified nucleotides into cellular nucleic acids. This Geobacter sp. (strain M21) protein is dTTP/UTP pyrophosphatase.